Consider the following 149-residue polypeptide: UPF0756 membrane protein MS1439 (149 aa).

The next 4 membrane-spanning stretches (helical) occupy residues 10 to 32 (IMLV…ISAL), 56 to 76 (VGII…KVQL), 82 to 102 (FLNW…WFAG), and 126 to 146 (VAFL…LAVI).

This sequence belongs to the UPF0756 family.

Its subcellular location is the cell membrane. The sequence is that of UPF0756 membrane protein MS1439 from Mannheimia succiniciproducens (strain KCTC 0769BP / MBEL55E).